Reading from the N-terminus, the 118-residue chain is uncharacterized protein (118 aa).

Transmembrane regions (helical) follow at residues 22–44, 54–71, and 78–99; these read IIAS…FSIA, LSPL…PVLR, and PILS…VEWL.

The protein resides in the cell membrane. This is an uncharacterized protein from Archaeoglobus fulgidus (strain ATCC 49558 / DSM 4304 / JCM 9628 / NBRC 100126 / VC-16).